Here is a 344-residue protein sequence, read N- to C-terminus: Dihydroorotase (344 aa).

Histidine 14 and histidine 16 together coordinate Zn(2+). Substrate-binding positions include 16–18 and asparagine 42; that span reads HFR. 3 residues coordinate Zn(2+): lysine 100, histidine 137, and histidine 175. Lysine 100 bears the N6-carboxylysine mark. A substrate-binding site is contributed by histidine 137. Leucine 220 contacts substrate. Aspartate 248 lines the Zn(2+) pocket. Aspartate 248 is a catalytic residue. The substrate site is built by histidine 252 and alanine 264.

The protein belongs to the metallo-dependent hydrolases superfamily. DHOase family. Class II DHOase subfamily. Homodimer. Zn(2+) is required as a cofactor.

It catalyses the reaction (S)-dihydroorotate + H2O = N-carbamoyl-L-aspartate + H(+). The protein operates within pyrimidine metabolism; UMP biosynthesis via de novo pathway; (S)-dihydroorotate from bicarbonate: step 3/3. Catalyzes the reversible cyclization of carbamoyl aspartate to dihydroorotate. The sequence is that of Dihydroorotase from Alcanivorax borkumensis (strain ATCC 700651 / DSM 11573 / NCIMB 13689 / SK2).